A 364-amino-acid chain; its full sequence is tRNA 2-selenouridine synthase (364 aa).

In terms of domain architecture, Rhodanese spans 14-137; it reads LLADTPLIDV…LRQTAIQATW (124 aa). Cys97 (S-selanylcysteine intermediate) is an active-site residue.

Belongs to the SelU family. In terms of assembly, monomer.

It carries out the reaction 5-methylaminomethyl-2-thiouridine(34) in tRNA + selenophosphate + (2E)-geranyl diphosphate + H2O + H(+) = 5-methylaminomethyl-2-selenouridine(34) in tRNA + (2E)-thiogeraniol + phosphate + diphosphate. The enzyme catalyses 5-methylaminomethyl-2-thiouridine(34) in tRNA + (2E)-geranyl diphosphate = 5-methylaminomethyl-S-(2E)-geranyl-thiouridine(34) in tRNA + diphosphate. The catalysed reaction is 5-methylaminomethyl-S-(2E)-geranyl-thiouridine(34) in tRNA + selenophosphate + H(+) = 5-methylaminomethyl-2-(Se-phospho)selenouridine(34) in tRNA + (2E)-thiogeraniol. It catalyses the reaction 5-methylaminomethyl-2-(Se-phospho)selenouridine(34) in tRNA + H2O = 5-methylaminomethyl-2-selenouridine(34) in tRNA + phosphate. Functionally, involved in the post-transcriptional modification of the uridine at the wobble position (U34) of tRNA(Lys), tRNA(Glu) and tRNA(Gln). Catalyzes the conversion of 2-thiouridine (S2U-RNA) to 2-selenouridine (Se2U-RNA). Acts in a two-step process involving geranylation of 2-thiouridine (S2U) to S-geranyl-2-thiouridine (geS2U) and subsequent selenation of the latter derivative to 2-selenouridine (Se2U) in the tRNA chain. This chain is tRNA 2-selenouridine synthase, found in Salmonella paratyphi A (strain ATCC 9150 / SARB42).